Reading from the N-terminus, the 287-residue chain is Ribosomal RNA small subunit methyltransferase A (287 aa).

6 residues coordinate S-adenosyl-L-methionine: Asn-28, Leu-30, Gly-55, Glu-76, Asp-101, and Asn-125.

It belongs to the class I-like SAM-binding methyltransferase superfamily. rRNA adenine N(6)-methyltransferase family. RsmA subfamily.

It is found in the cytoplasm. The enzyme catalyses adenosine(1518)/adenosine(1519) in 16S rRNA + 4 S-adenosyl-L-methionine = N(6)-dimethyladenosine(1518)/N(6)-dimethyladenosine(1519) in 16S rRNA + 4 S-adenosyl-L-homocysteine + 4 H(+). Functionally, specifically dimethylates two adjacent adenosines (A1518 and A1519) in the loop of a conserved hairpin near the 3'-end of 16S rRNA in the 30S particle. May play a critical role in biogenesis of 30S subunits. In Alkaliphilus metalliredigens (strain QYMF), this protein is Ribosomal RNA small subunit methyltransferase A.